The following is a 73-amino-acid chain: Toxin Td4 (73 aa).

The N-terminal stretch at 1–7 (IGMVVEC) is a signal peptide. The 63-residue stretch at 8 to 70 (KDGYLVGNDG…TWDRATNRCG (63 aa)) folds into the LCN-type CS-alpha/beta domain. 4 disulfides stabilise this stretch: Cys-18/Cys-69, Cys-22/Cys-44, Cys-30/Cys-50, and Cys-34/Cys-52. Residue Arg-71 is modified to Arginine amide.

Belongs to the long (4 C-C) scorpion toxin superfamily. Sodium channel inhibitor family. Beta subfamily. As to expression, expressed by the venom gland.

Its subcellular location is the secreted. Functionally, beta toxins bind voltage-independently at site-4 of sodium channels (Nav) and shift the voltage of activation toward more negative potentials thereby affecting sodium channel activation and promoting spontaneous and repetitive firing. This is Toxin Td4 from Tityus discrepans (Venezuelan scorpion).